The primary structure comprises 537 residues: Ataxin-10 homolog (537 aa).

The protein belongs to the ataxin-10 family.

The protein resides in the cytoplasm. Its function is as follows. May play a role in the regulation of cytokinesis. The sequence is that of Ataxin-10 homolog (CTR86) from Kluyveromyces lactis (strain ATCC 8585 / CBS 2359 / DSM 70799 / NBRC 1267 / NRRL Y-1140 / WM37) (Yeast).